Here is a 409-residue protein sequence, read N- to C-terminus: MDKLLERFLHYVSLDTQSKSGVRQVPSTEGQWKLLRLLKQQLEEMGLVNITLSEKGTLMATLPANVEGDIPAIGFISHVDTSPDFSGKNVNPQIVENYRGGDIALGIGDEVLSPVMFPVLHQLLGQTLVTTDGKTLLGADDKAGVAEIMTALAVLKGNPIPHGDIKVAFTPDEEVGKGAKHFDVEEFGAQWAYTVDGGGVGELEFENFNAASVNIKIVGNNVHPGTAKGVMVNALSLAARIHAEVPADEAPETTEGYEGFYHLASMKGTVDRAEMHYIIRDFDRKQFEARKRKMMEIAKKVGKGLHPDCYIELVIEDSYYNMREKVVEHPHILDIAQQAMRDCHITPEMKPIRGGTDGAQLSFMGLPCPNLFTGGYNYHGKHEFVTLEGMEKAVQVIVRIAELTAKRGQ.

A Zn(2+)-binding site is contributed by H78. D80 is an active-site residue. D140 contacts Zn(2+). The active-site Proton acceptor is the E173. Residues E174, D196, and H379 each contribute to the Zn(2+) site.

The protein belongs to the peptidase M20B family. It depends on Zn(2+) as a cofactor.

It is found in the cytoplasm. The catalysed reaction is Release of the N-terminal residue from a tripeptide.. Its function is as follows. Cleaves the N-terminal amino acid of tripeptides. This is Peptidase T from Salmonella dublin (strain CT_02021853).